The sequence spans 461 residues: MKSKNSMSVLCLVDGEHYFPVTKSAVDKIESKGYDVKLLLFIGGTEKLRDTNVDIISEMFNKPVLFGQDHSKVPYDLIEESIKEYDVGMVVDLSDEPVVNYSIRFNIATIALLNGCMYKGSDFEFKALEEEDVLNNPSYKIIGTGKRIGKTAVSAYTARLINKDSDFVPCVVAMGRGGPQIPEIVRGDKIHLTPKYLMEKSDKGFHAASDHWEDALMSRVLTVGCRRCAGGMAGMVYETNMVEGAMMTNDLDVNLVALEGSGSAIPPVKADKQIVLVGGHQPMETLTEYFGPYRIKLADLIIITMCDEQICSREKLDDLLIKIHEINPNADIVPTIFRPHPVDDISNKNILFATTAPESVQHLLKDYLEENFNCNVVAISSHLSNRPLLQRDIEENIDNIDCMLTELKAAAVDVATKDALNKGLEVVYCDNIPIAINDEYDLDKSIMNIVYEAKESFNKKD.

This sequence belongs to the cyclic 2,3-diphosphoglycerate synthetase family.

It localises to the cytoplasm. The enzyme catalyses (2R)-2,3-bisphosphoglycerate + ATP + H(+) = cyclic (2R)-2,3-bisphosphoglycerate + ADP + phosphate. Functionally, catalyzes the formation of cyclic 2,3-diphosphoglycerate (cDPG) by formation of an intramolecular phosphoanhydride bond at the expense of ATP. This is Cyclic 2,3-diphosphoglycerate synthetase from Methanosphaera stadtmanae (strain ATCC 43021 / DSM 3091 / JCM 11832 / MCB-3).